The sequence spans 1126 residues: Probable serine/threonine-protein kinase DDB_G0280111 (1126 aa).

The Protein kinase domain maps to 16–295 (LNFVKQIAEG…NLLRNQQPLF (280 aa)). ATP is bound by residues 22–30 (IAEGGFSYV) and lysine 45. Aspartate 147 (proton acceptor) is an active-site residue. Positions 314–333 (NNNNNINNNNNNNIVNGKNI) are enriched in low complexity. 4 disordered regions span residues 314-469 (NNNN…NGNN), 760-901 (LNLN…QQQQ), 944-1072 (TPSS…DEVR), and 1095-1126 (NKQSRMNNPNNLFDEGDSGFGDGEEEDEGLLN). Positions 347–364 (TPTPPPPAPSQSPSPSPS) are enriched in pro residues. Residues 367–390 (VVNNIENNSNGLEHSNSNGNISQP) show a composition bias toward polar residues. Low complexity-rich tracts occupy residues 413-422 (PPNNSNNSFD), 432-469 (NLSNNPFNVNSNDNSNSSNNNNNNNNNNNNNNNNNGNN), and 760-795 (LNLNNNNNNNNNSNNSNNSNNSNSGNLSGNASLNSS). Composition is skewed to polar residues over residues 796-825 (FDNINSSNPFSTEPTFNPFSATTTNTSESG) and 833-845 (EPTSNPSPRYQQS). Residues 846–856 (NNNNNNNNNNN) are compositionally biased toward low complexity. A compositionally biased stretch (polar residues) spans 857–866 (GTPISLTPGS). Low complexity-rich tracts occupy residues 886-901 (QQQQHPQQQQQQQQQQ), 953-971 (PSTGPTTAAQQQQQQQQSQ), and 1003-1035 (NVNINNNNNSHVSAPHSLNSSSSSISSISNPNL). A compositionally biased stretch (polar residues) spans 1095-1105 (NKQSRMNNPNN). A compositionally biased stretch (acidic residues) spans 1108-1126 (DEGDSGFGDGEEEDEGLLN).

This sequence belongs to the protein kinase superfamily. Ser/Thr protein kinase family.

The catalysed reaction is L-seryl-[protein] + ATP = O-phospho-L-seryl-[protein] + ADP + H(+). It carries out the reaction L-threonyl-[protein] + ATP = O-phospho-L-threonyl-[protein] + ADP + H(+). This is Probable serine/threonine-protein kinase DDB_G0280111 from Dictyostelium discoideum (Social amoeba).